Consider the following 312-residue polypeptide: MKHLLSISDLSKDEIVGLLDEADRFKEVLEGREVKKLPTLRGRTIFTLFYENSTRTRSSFETAGKWMSADVINISASSSSVKKGESLKDTGLTLSAIGADAIIMRHPASGAAQQLAQFVAPGGNGPSVINAGDGSHQHPTQALLDALTIRQRTGRIEGLKVVIVGDCLHSRVVRSNVDLLSTLGAEVVLVAPPTLLPMGVENWPVRFSYDMDAEIADADVVMMLRVQQERMQGGFFPSHREYATLYGMSKEREARLKDSAIIMHPGPMLRGMEINFQVADAPRTAVLQQVSNGVHMRMAILFALVAGSDATI.

Carbamoyl phosphate-binding residues include Arg-55 and Thr-56. L-aspartate is bound at residue Lys-83. Carbamoyl phosphate-binding residues include Arg-105, His-138, and Gln-141. Residues Arg-171 and Arg-225 each coordinate L-aspartate. Carbamoyl phosphate is bound by residues Gly-266 and Pro-267.

The protein belongs to the aspartate/ornithine carbamoyltransferase superfamily. ATCase family. In terms of assembly, heterododecamer (2C3:3R2) of six catalytic PyrB chains organized as two trimers (C3), and six regulatory PyrI chains organized as three dimers (R2).

The catalysed reaction is carbamoyl phosphate + L-aspartate = N-carbamoyl-L-aspartate + phosphate + H(+). It functions in the pathway pyrimidine metabolism; UMP biosynthesis via de novo pathway; (S)-dihydroorotate from bicarbonate: step 2/3. Catalyzes the condensation of carbamoyl phosphate and aspartate to form carbamoyl aspartate and inorganic phosphate, the committed step in the de novo pyrimidine nucleotide biosynthesis pathway. The protein is Aspartate carbamoyltransferase catalytic subunit of Corynebacterium glutamicum (strain R).